A 190-amino-acid chain; its full sequence is Elongation factor P (190 aa).

Belongs to the elongation factor P family.

It is found in the cytoplasm. It functions in the pathway protein biosynthesis; polypeptide chain elongation. Involved in peptide bond synthesis. Stimulates efficient translation and peptide-bond synthesis on native or reconstituted 70S ribosomes in vitro. Probably functions indirectly by altering the affinity of the ribosome for aminoacyl-tRNA, thus increasing their reactivity as acceptors for peptidyl transferase. The polypeptide is Elongation factor P (Hyphomonas neptunium (strain ATCC 15444)).